We begin with the raw amino-acid sequence, 324 residues long: Adducin-related protein C1289.14 (324 aa).

Belongs to the aldolase class II family. Adducin subfamily.

The polypeptide is Adducin-related protein C1289.14 (Schizosaccharomyces pombe (strain 972 / ATCC 24843) (Fission yeast)).